A 188-amino-acid chain; its full sequence is GMP synthase [glutamine-hydrolyzing] subunit A (188 aa).

The 187-residue stretch at 2 to 188 (KVGLVYYGGQ…FKNFLGVCRK (187 aa)) folds into the Glutamine amidotransferase type-1 domain. Cysteine 79 serves as the catalytic Nucleophile. Residues histidine 166 and glutamate 168 contribute to the active site.

In terms of assembly, heterodimer composed of a glutamine amidotransferase subunit (A) and a GMP-binding subunit (B).

It catalyses the reaction XMP + L-glutamine + ATP + H2O = GMP + L-glutamate + AMP + diphosphate + 2 H(+). Its pathway is purine metabolism; GMP biosynthesis; GMP from XMP (L-Gln route): step 1/1. Its function is as follows. Catalyzes the synthesis of GMP from XMP. The chain is GMP synthase [glutamine-hydrolyzing] subunit A from Saccharolobus solfataricus (strain ATCC 35092 / DSM 1617 / JCM 11322 / P2) (Sulfolobus solfataricus).